The chain runs to 1168 residues: Pre-mRNA-splicing factor ATP-dependent RNA helicase prp22 (1168 aa).

2 disordered regions span residues 77-100 and 144-197; these read KDDIPTDNVNNGSNSVNGASHDLD and TLAK…RSSR. Residues 84-94 show a composition bias toward low complexity; the sequence is NVNNGSNSVNG. A compositionally biased stretch (basic and acidic residues) spans 149 to 173; that stretch reads RRNDRDSRRDERHYLNGIRERRERS. Residues 184 to 197 are compositionally biased toward low complexity; the sequence is TSISGQSHSSRSSR. Positions 207–280 constitute an S1 motif domain; the sequence is YGIYSGVVSG…SAKRISLSMK (74 aa). Residues 287 to 314 form a disordered region; the sequence is GEDLNPDQVSRSTKKGSGANAIPLSAQN. The region spanning 520-684 is the Helicase ATP-binding domain; it reads LEAVSKNQIL…FYKCPIFTIP (165 aa). Residue 533 to 540 participates in ATP binding; the sequence is GETGSGKT. The short motif at 631–634 is the DEAH box element; that stretch reads DEAH. The Helicase C-terminal domain occupies 702-882; sequence YLDAALMTVM…HTILMLKAMG (181 aa).

Belongs to the DEAD box helicase family. DEAH subfamily. DDX8/PRP22 sub-subfamily. As to quaternary structure, belongs to the 40S cdc5-associated complex (or cwf complex), a spliceosome sub-complex reminiscent of a late-stage spliceosome composed of the U2, U5 and U6 snRNAs and at least brr2, cdc5, cwf2/prp3, cwf3/syf1, cwf4/syf3, cwf5/ecm2, spp42/cwf6, cwf7/spf27, cwf8, cwf9, cwf10, cwf11, cwf12, prp45/cwf13, cwf14, cwf15, cwf16, cwf17, cwf18, cwf19, cwf20, cwf21, cwf22, cwf23, cwf24, cwf25, cwf26, cyp7/cwf27, cwf28, cwf29/ist3, lea1, msl1, prp5/cwf1, prp10, prp12/sap130, prp17, prp22, sap61, sap62, sap114, sap145, slu7, smb1, smd1, smd3, smf1, smg1 and syf2.

It localises to the nucleus. The enzyme catalyses ATP + H2O = ADP + phosphate + H(+). Functionally, acts late in the splicing of pre-mRNA. Required for the splicing of introns with a branch nucleotide to 3'-splice site distance greater or equal to 15. Mediates the release of the spliced mRNA from spliceosomes. This chain is Pre-mRNA-splicing factor ATP-dependent RNA helicase prp22 (prp22), found in Schizosaccharomyces pombe (strain 972 / ATCC 24843) (Fission yeast).